We begin with the raw amino-acid sequence, 189 residues long: Thymidine kinase (189 aa).

ATP contacts are provided by residues 9 to 16 and 85 to 88; these read GTMNSGKT and DESQ. Glutamate 86 acts as the Proton acceptor in catalysis. Residues cysteine 143, cysteine 146, cysteine 180, and histidine 183 each contribute to the Zn(2+) site.

Belongs to the thymidine kinase family. Homotetramer.

It is found in the cytoplasm. The enzyme catalyses thymidine + ATP = dTMP + ADP + H(+). This Streptococcus pyogenes serotype M6 (strain ATCC BAA-946 / MGAS10394) protein is Thymidine kinase.